A 1372-amino-acid chain; its full sequence is DNA-directed RNA polymerase subunit beta' (1372 aa).

Zn(2+) contacts are provided by Cys69, Cys71, Cys84, and Cys87. Mg(2+) contacts are provided by Asp460, Asp462, and Asp464. Residues Cys808, Cys882, Cys889, and Cys892 each contribute to the Zn(2+) site.

This sequence belongs to the RNA polymerase beta' chain family. The RNAP catalytic core consists of 2 alpha, 1 beta, 1 beta' and 1 omega subunit. When a sigma factor is associated with the core the holoenzyme is formed, which can initiate transcription. The cofactor is Mg(2+). It depends on Zn(2+) as a cofactor.

The enzyme catalyses RNA(n) + a ribonucleoside 5'-triphosphate = RNA(n+1) + diphosphate. DNA-dependent RNA polymerase catalyzes the transcription of DNA into RNA using the four ribonucleoside triphosphates as substrates. This chain is DNA-directed RNA polymerase subunit beta', found in Rickettsia felis (strain ATCC VR-1525 / URRWXCal2) (Rickettsia azadi).